Consider the following 189-residue polypeptide: Peptidyl-tRNA hydrolase (189 aa).

Residue H19 is the Proton acceptor of the active site. 3 residues coordinate tRNA: Y64, N66, and N112.

This sequence belongs to the PTH family. Monomer.

It localises to the cytoplasm. The catalysed reaction is an N-acyl-L-alpha-aminoacyl-tRNA + H2O = an N-acyl-L-amino acid + a tRNA + H(+). Functionally, hydrolyzes ribosome-free peptidyl-tRNAs (with 1 or more amino acids incorporated), which drop off the ribosome during protein synthesis, or as a result of ribosome stalling. Catalyzes the release of premature peptidyl moieties from peptidyl-tRNA molecules trapped in stalled 50S ribosomal subunits, and thus maintains levels of free tRNAs and 50S ribosomes. In Gluconobacter oxydans (strain 621H) (Gluconobacter suboxydans), this protein is Peptidyl-tRNA hydrolase.